Consider the following 203-residue polypeptide: Cardiotrophin-2 (203 aa).

Residues 1 to 21 form the signal peptide; the sequence is MSCSLARLCLLTLLSPPLSSA. N-linked (GlcNAc...) asparagine glycosylation occurs at N43.

It belongs to the IL-6 superfamily.

It is found in the secreted. Functionally, may have an important role in neuronal precursor development and maturation. This chain is Cardiotrophin-2 (CTF2), found in Pan troglodytes (Chimpanzee).